The following is a 401-amino-acid chain: Argininosuccinate synthase (401 aa).

ATP-binding positions include 9-17 (AYSGGLDTS) and Ala-35. Tyr-86 contributes to the L-citrulline binding site. Gly-116 serves as a coordination point for ATP. 3 residues coordinate L-aspartate: Thr-118, Asn-122, and Asp-123. Asn-122 is an L-citrulline binding site. Positions 126, 175, 184, 261, and 273 each coordinate L-citrulline.

This sequence belongs to the argininosuccinate synthase family. Type 1 subfamily. Homotetramer.

It is found in the cytoplasm. It carries out the reaction L-citrulline + L-aspartate + ATP = 2-(N(omega)-L-arginino)succinate + AMP + diphosphate + H(+). It participates in amino-acid biosynthesis; L-arginine biosynthesis; L-arginine from L-ornithine and carbamoyl phosphate: step 2/3. In Aquifex aeolicus (strain VF5), this protein is Argininosuccinate synthase.